A 129-amino-acid polypeptide reads, in one-letter code: Large ribosomal subunit protein bL20 (129 aa).

Belongs to the bacterial ribosomal protein bL20 family.

In terms of biological role, binds directly to 23S ribosomal RNA and is necessary for the in vitro assembly process of the 50S ribosomal subunit. It is not involved in the protein synthesizing functions of that subunit. This is Large ribosomal subunit protein bL20 from Mycolicibacterium gilvum (strain PYR-GCK) (Mycobacterium gilvum (strain PYR-GCK)).